We begin with the raw amino-acid sequence, 229 residues long: 7-cyano-7-deazaguanine synthase (229 aa).

7-17 (LSGGLDSSTIL) contributes to the ATP binding site. The Zn(2+) site is built by cysteine 191, cysteine 199, cysteine 202, and cysteine 205.

Belongs to the QueC family. Zn(2+) is required as a cofactor.

It catalyses the reaction 7-carboxy-7-deazaguanine + NH4(+) + ATP = 7-cyano-7-deazaguanine + ADP + phosphate + H2O + H(+). The protein operates within purine metabolism; 7-cyano-7-deazaguanine biosynthesis. Catalyzes the ATP-dependent conversion of 7-carboxy-7-deazaguanine (CDG) to 7-cyano-7-deazaguanine (preQ(0)). The polypeptide is 7-cyano-7-deazaguanine synthase (Nostoc sp. (strain PCC 7120 / SAG 25.82 / UTEX 2576)).